We begin with the raw amino-acid sequence, 628 residues long: Beta-galactosidase large subunit (628 aa).

The active-site Proton donor is Glu-468. Catalysis depends on Glu-536, which acts as the Nucleophile.

This sequence belongs to the glycosyl hydrolase 2 family. As to quaternary structure, heterodimer of a large (LacL) and a small subunit (LacM).

It catalyses the reaction Hydrolysis of terminal non-reducing beta-D-galactose residues in beta-D-galactosides.. Component of a beta-galactosidase. The sequence is that of Beta-galactosidase large subunit (lacL) from Lactobacillus acidophilus (strain ATCC 700396 / NCK56 / N2 / NCFM).